The chain runs to 959 residues: MTESGSYKDTVNLPKTSFDMRANAIKREPEIQKFWEENKIYDRLFENNPGELFILHDGPPYANGSLHIGHALNKILKDIINRYQMLRGRKVRYVPGWDCHGLPIELKVLQNMKSAERQNLTPLQLRQKAKEFGLATVDNQRQNFKRYGIWGDWDNPYLTLKPEYEAAQIGVFGQMFLKGYIYRGLKPVHWSPSSKTALAEAELEYPEGHVSRSIYAAFPVTSLAEAVKPLLAEYQSDLGVAIWTTTPWTIPGNLAVAVNADLNYAVVEVSQSEAQSKFKYLIVAADLVERLSSTLGLELTLKATFKGNDLEHTTYRHPLFDRESPIVVGGDYITTESGTGLVHTAPGHGQEDYIVGQRYGLPILAPVDDNGNFTQEAGEFAGLNVLGDGNQAVIDALAAAGSLLKEEPYPHKYPYDWRTKKPTIFRATEQWFASVEGFREEALKAIATVKWIPAQGENRITPMVAERSDWCISRQRSWGVPIPVFYDEATGEPLLNEEIINHVQGIIAEKGSDAWWELSVEELLPESYRQNGKSYRRGTDTMDVWFDSGSSWASVVQQRPELRYPADIYLEGSDQHRGWFQSSLLTSVAVNDIAPYKTVLTHGFALDEQGRKMSKSEGNVVDPNTIIEGGKNQKVEPAYGADVLRLWVSSVDYSGDVRIGKNIIKQMNDVRGKIRNTARFLLGSLDDFDPEKDTVPFEELPELDRYMLHRITEVFEEVTEAFESFQFFRFFQTVQNFCVVDLSNFYLDVAKDRLYISAKDAFRRRSCQTVLKIALDNLARAIAPVLSHTAEDIWQYLPYKTPYKSVFEAGWVQVEEKWRNPELAEFWSELRKIRDKVNKTLEIYRLQKTIGSSLEAKVVVHVFDERLRQRLQALNPNTHGSVEKSNGVDELRYLFLASQVEVPSEPIFEEGDDAGIYIQVYKADGEKCDRCWNYSTHVGESAEHPLICERCVAALAGEF.

The short motif at 60–70 is the 'HIGH' region element; the sequence is PYANGSLHIGH. Glu571 is a binding site for L-isoleucyl-5'-AMP. Residues 612-616 carry the 'KMSKS' region motif; sequence KMSKS. Lys615 contributes to the ATP binding site. Cys928, Cys931, Cys948, and Cys951 together coordinate Zn(2+).

It belongs to the class-I aminoacyl-tRNA synthetase family. IleS type 1 subfamily. As to quaternary structure, monomer. Requires Zn(2+) as cofactor.

The protein resides in the cytoplasm. It catalyses the reaction tRNA(Ile) + L-isoleucine + ATP = L-isoleucyl-tRNA(Ile) + AMP + diphosphate. In terms of biological role, catalyzes the attachment of isoleucine to tRNA(Ile). As IleRS can inadvertently accommodate and process structurally similar amino acids such as valine, to avoid such errors it has two additional distinct tRNA(Ile)-dependent editing activities. One activity is designated as 'pretransfer' editing and involves the hydrolysis of activated Val-AMP. The other activity is designated 'posttransfer' editing and involves deacylation of mischarged Val-tRNA(Ile). The protein is Isoleucine--tRNA ligase of Nostoc punctiforme (strain ATCC 29133 / PCC 73102).